A 240-amino-acid polypeptide reads, in one-letter code: T4 protein (240 aa).

Belongs to the poxviruses B9 family.

This is T4 protein from Sheeppox virus (strain InS-1) (SPPV).